Consider the following 171-residue polypeptide: Protein GrpE (171 aa).

Residues 1–20 (MNEEKEESPSTEAEGAGAEV) are disordered.

Belongs to the GrpE family. Homodimer.

The protein localises to the cytoplasm. Its function is as follows. Participates actively in the response to hyperosmotic and heat shock by preventing the aggregation of stress-denatured proteins, in association with DnaK and GrpE. It is the nucleotide exchange factor for DnaK and may function as a thermosensor. Unfolded proteins bind initially to DnaJ; upon interaction with the DnaJ-bound protein, DnaK hydrolyzes its bound ATP, resulting in the formation of a stable complex. GrpE releases ADP from DnaK; ATP binding to DnaK triggers the release of the substrate protein, thus completing the reaction cycle. Several rounds of ATP-dependent interactions between DnaJ, DnaK and GrpE are required for fully efficient folding. The sequence is that of Protein GrpE from Acidithiobacillus ferrooxidans (strain ATCC 23270 / DSM 14882 / CIP 104768 / NCIMB 8455) (Ferrobacillus ferrooxidans (strain ATCC 23270)).